The sequence spans 301 residues: MDLSELERDNTGRCRLSSPVPAVCLKEPCVLGVDEAGRGPVLGPMVYAICYCPLSRLADLEALKVADSKTLTENERERLFAKMEEDGDFVGWALDILSPNLISTSMLGRVKYNLNSMSHDTAAGLIQHAMDQNVKVTQVFVDTVGMPETYQARLQQRFPGIEVTVKAKADSLFPVVSAASIIAKVARDQAVKNWQFVESLQGLDSDYGSGYPNDPKTKAWLRKHVDPVFGFPQFVRFSWSTAQAILEKEAESVTWEDSAAEEDPEGPGRITSYFSQGPQACRPQVSHKYFQERGLETATSL.

Residue methionine 1 is modified to N-acetylmethionine. Residues 28 to 251 (PCVLGVDEAG…AQAILEKEAE (224 aa)) form the RNase H type-2 domain. Residues aspartate 34, glutamate 35, and aspartate 142 each coordinate a divalent metal cation. Position 217 is a phosphothreonine (threonine 217). Serine 258 bears the Phosphoserine mark.

The protein belongs to the RNase HII family. Eukaryotic subfamily. In terms of assembly, the RNase H2 complex is a heterotrimer composed of the catalytic subunit RNASEH2A and the non-catalytic subunits RNASEH2B and RNASEH2C. Requires Mn(2+) as cofactor. It depends on Mg(2+) as a cofactor.

The protein localises to the nucleus. It carries out the reaction Endonucleolytic cleavage to 5'-phosphomonoester.. In terms of biological role, catalytic subunit of RNase HII, an endonuclease that specifically degrades the RNA of RNA:DNA hybrids. Participates in DNA replication, possibly by mediating the removal of lagging-strand Okazaki fragment RNA primers during DNA replication. Mediates the excision of single ribonucleotides from DNA:RNA duplexes. The chain is Ribonuclease H2 subunit A (Rnaseh2a) from Rattus norvegicus (Rat).